The sequence spans 856 residues: Phosphatidylglycerol lysyltransferase (856 aa).

Transmembrane regions (helical) follow at residues A7 to S27, L51 to V71, V88 to G108, I128 to A148, P161 to S181, S208 to I228, V235 to F255, I280 to A300, S342 to I362, A375 to I395, F420 to V440, I459 to I479, and H501 to Y521.

This sequence belongs to the LPG synthase family.

The protein localises to the cell membrane. It carries out the reaction L-lysyl-tRNA(Lys) + a 1,2-diacyl-sn-glycero-3-phospho-(1'-sn-glycerol) = a 1,2-diacyl-sn-glycero-3-phospho-1'-(3'-O-L-lysyl)-sn-glycerol + tRNA(Lys). In terms of biological role, catalyzes the transfer of a lysyl group from L-lysyl-tRNA(Lys) to membrane-bound phosphatidylglycerol (PG), which produces lysylphosphatidylglycerol (LPG), one of the components of the bacterial membrane with a positive net charge. LPG synthesis contributes to the resistance to cationic antimicrobial peptides (CAMPs) and likely protects B.subtilis against its own CAMPs and against those produced by competiting microorganisms (bacteriocins). In fact, the modification of anionic phosphatidylglycerol with positively charged L-lysine results in repulsion of the peptides. The polypeptide is Phosphatidylglycerol lysyltransferase (mprF) (Bacillus subtilis (strain 168)).